The primary structure comprises 1393 residues: Major capsid protein (1393 aa).

It belongs to the herpesviridae major capsid protein family. Homomultimer. Makes the hexons and eleven out of twelve pentons. Interacts with triplex proteins 1/TRX1 and 2/TRX2; adjacent capsomers are linked together in groups of three by triplexes, heterotrimeric complexes composed of one molecule of TRX1 and two molecules of TRX2. Interacts with scaffold protein; this interaction allows efficient MCP transport to the host nucleus. Interacts with capsid vertex component 2/CVC2. Interacts with the small capsomere-interacting protein/SCP.

The protein localises to the virion. It localises to the host nucleus. Functionally, self-assembles to form an icosahedral capsid with a T=16 symmetry, about 200 nm in diameter, and consisting of 150 hexons and 12 pentons (total of 162 capsomers). Hexons form the edges and faces of the capsid and are each composed of six MCP molecules. In contrast, one penton is found at each of the 12 vertices. Eleven of the pentons are MCP pentamers, while the last vertex is occupied by the portal complex. The capsid is surrounded by a layer of proteinaceous material designated the tegument which, in turn, is enclosed in an envelope of host cell-derived lipids containing virus-encoded glycoproteins. The protein is Major capsid protein of Gallus gallus (Chicken).